We begin with the raw amino-acid sequence, 271 residues long: Aquaporin-2 (271 aa).

At 1-11 the chain is on the cytoplasmic side; sequence MWELRSIAFSR. The helical transmembrane segment at 12–32 threads the bilayer; the sequence is AVLAEFLATLLFVFFGLGSAL. Topologically, residues 33–40 are extracellular; sequence NWPQALPS. A helical transmembrane segment spans residues 41 to 59; the sequence is VLQIAMAFGLAIGTLVQAL. The Cytoplasmic segment spans residues 60–64; that stretch reads GHVSG. Positions 65–74 form an intramembrane region, discontinuously helical; sequence AHINPAVTVA. The NPA 1 motif lies at 68–70; it reads NPA. The Cytoplasmic segment spans residues 75–85; that stretch reads CLVGCHVSFLR. Residues 86–107 traverse the membrane as a helical segment; it reads AVFYVAAQLLGAVAGAALLHEI. At 108-127 the chain is on the extracellular side; the sequence is TPPAIRGDLAVNALNNNSTA. Asn123 carries N-linked (GlcNAc...) asparagine glycosylation. Residues 128–148 traverse the membrane as a helical segment; that stretch reads GQAVTVELFLTLQLVLCIFAS. Residues 149-156 are Cytoplasmic-facing; that stretch reads TDERRGDN. A helical transmembrane segment spans residues 157 to 176; it reads VGTPALSIGFSVALGHLLGI. Topologically, residues 177 to 180 are extracellular; sequence HYTG. Positions 181–193 form an intramembrane region, discontinuously helical; the sequence is CSMNPARSLAPAI. The NPA 2 motif lies at 184-186; sequence NPA. The Extracellular portion of the chain corresponds to 194-201; it reads VTGKFDDH. The helical transmembrane segment at 202–222 threads the bilayer; the sequence is WVFWIGPLVGAIVASLLYNYV. Residues 223 to 271 lie on the Cytoplasmic side of the membrane; it reads LFPPAKSLSERLAVLKGLEPDTDWEEREVRRRQSVELHSPQSLPRGSKA. A disordered region spans residues 251–271; it reads VRRRQSVELHSPQSLPRGSKA. The residue at position 256 (Ser256) is a Phosphoserine. Over residues 261–271 the composition is skewed to polar residues; the sequence is SPQSLPRGSKA.

It belongs to the MIP/aquaporin (TC 1.A.8) family. Homotetramer. Ser-256 phosphorylation is necessary and sufficient for expression at the apical membrane. Endocytosis is not phosphorylation-dependent. Post-translationally, N-glycosylated.

The protein localises to the apical cell membrane. The protein resides in the basolateral cell membrane. It is found in the cell membrane. It localises to the cytoplasmic vesicle membrane. Its subcellular location is the golgi apparatus. The protein localises to the trans-Golgi network membrane. It carries out the reaction H2O(in) = H2O(out). The enzyme catalyses glycerol(in) = glycerol(out). In terms of biological role, forms a water-specific channel that provides the plasma membranes of renal collecting duct with high permeability to water, thereby permitting water to move in the direction of an osmotic gradient. Could also be permeable to glycerol. This is Aquaporin-2 from Bos taurus (Bovine).